The primary structure comprises 248 residues: Cell division protein ZapD (248 aa).

This sequence belongs to the ZapD family. As to quaternary structure, interacts with FtsZ.

The protein localises to the cytoplasm. In terms of biological role, cell division factor that enhances FtsZ-ring assembly. Directly interacts with FtsZ and promotes bundling of FtsZ protofilaments, with a reduction in FtsZ GTPase activity. The protein is Cell division protein ZapD of Aliivibrio fischeri (strain ATCC 700601 / ES114) (Vibrio fischeri).